Reading from the N-terminus, the 233-residue chain is 2,3,4,5-tetrahydropyridine-2,6-dicarboxylate N-acetyltransferase (233 aa).

This sequence belongs to the transferase hexapeptide repeat family. DapH subfamily.

The catalysed reaction is (S)-2,3,4,5-tetrahydrodipicolinate + acetyl-CoA + H2O = L-2-acetamido-6-oxoheptanedioate + CoA. The protein operates within amino-acid biosynthesis; L-lysine biosynthesis via DAP pathway; LL-2,6-diaminopimelate from (S)-tetrahydrodipicolinate (acetylase route): step 1/3. Its function is as follows. Catalyzes the transfer of an acetyl group from acetyl-CoA to tetrahydrodipicolinate. In Petrotoga mobilis (strain DSM 10674 / SJ95), this protein is 2,3,4,5-tetrahydropyridine-2,6-dicarboxylate N-acetyltransferase.